Here is a 497-residue protein sequence, read N- to C-terminus: NAD(P)H-quinone oxidoreductase chain 4, chloroplastic (497 aa).

13 helical membrane-spanning segments follow: residues 4–24 (LPWLTIIVLLPICAGLLIPLF), 35–55 (YTLGICIIEFLLITYIFCCHF), 87–107 (MGLILLTGFVTTLATLAAWPV), 113–133 (LFHFLMLAMYSGQIGLFASQD), 134–154 (ILLFFFMWELELIPIYLLLSI), 167–187 (FILYTAGGSIFLLIGALTIGL), 207–227 (IALEIIIYSGFLIAYAVKLPI), 242–262 (HYSTCMLLAGILLKMGGYGLI), 274–294 (AIFAPWMVMFGAVQIVYASLI), 313–333 (MGFVMIGIGSLTNIGLNGAIL), 386–406 (LALPGMSGFVAELMVFLGIVI), 416–436 (IVITIIEAIGIILTPIYLLSM), and 462–482 (IFISLCLLLPIIGIGLYPNLV).

The protein belongs to the complex I subunit 4 family.

It localises to the plastid. It is found in the chloroplast thylakoid membrane. The catalysed reaction is a plastoquinone + NADH + (n+1) H(+)(in) = a plastoquinol + NAD(+) + n H(+)(out). The enzyme catalyses a plastoquinone + NADPH + (n+1) H(+)(in) = a plastoquinol + NADP(+) + n H(+)(out). This Angiopteris evecta (Mule's foot fern) protein is NAD(P)H-quinone oxidoreductase chain 4, chloroplastic.